Reading from the N-terminus, the 227-residue chain is uncharacterized protein (227 aa).

Residues I7 to L26 form a helical membrane-spanning segment.

The protein resides in the membrane. This is an uncharacterized protein from Haemophilus influenzae (strain ATCC 51907 / DSM 11121 / KW20 / Rd).